The following is a 430-amino-acid chain: Adenylosuccinate synthetase (430 aa).

GTP-binding positions include 13–19 (GDEGKGK) and 41–43 (GHT). Catalysis depends on Asp-14, which acts as the Proton acceptor. Residues Asp-14 and Gly-41 each contribute to the Mg(2+) site. IMP-binding positions include 14 to 17 (DEGK), 39 to 42 (NAGH), Thr-130, Arg-144, Gln-225, Thr-240, and Arg-304. Residue His-42 is the Proton donor of the active site. Position 300-306 (300-306 (STTGRAR)) interacts with substrate. GTP contacts are provided by residues Arg-306, 332–334 (KLD), and 414–416 (STG).

It belongs to the adenylosuccinate synthetase family. Homodimer. Mg(2+) is required as a cofactor.

Its subcellular location is the cytoplasm. It carries out the reaction IMP + L-aspartate + GTP = N(6)-(1,2-dicarboxyethyl)-AMP + GDP + phosphate + 2 H(+). The protein operates within purine metabolism; AMP biosynthesis via de novo pathway; AMP from IMP: step 1/2. Its function is as follows. Plays an important role in the de novo pathway of purine nucleotide biosynthesis. Catalyzes the first committed step in the biosynthesis of AMP from IMP. This is Adenylosuccinate synthetase from Azotobacter vinelandii (strain DJ / ATCC BAA-1303).